Here is a 1130-residue protein sequence, read N- to C-terminus: MLEICLKLVGCKSKKGLSSSSSCYLEEALQRPVASDFEPQGLSEAARWNSKENLLAGPSENDPNLFVALYDFVASGDNTLSITKGEKLRVLGYNHNGEWCEAQTKNGQGWVPSNYITPVNSLEKHSWYHGPVSRNAAEYLLSSGINGSFLVRESESSPGQRSISLRYEGRVYHYRINTASDGKLYVSSESRFNTLAELVHHHSTVADGLITTLHYPAPKRNKPTVYGVSPNYDKWEMERTDITMKHKLGGGQYGEVYEGVWKKYSLTVAVKTLKEDTMEVEEFLKEAAVMKEIKHPNLVQLLGVCTREPPFYIITEFMTYGNLLDYLRECNRQEVNAVVLLYMATQISSAMEYLEKKNFIHRDLAARNCLVGENHLVKVADFGLSRLMTGDTYTAHAGAKFPIKWTAPESLAYNKFSIKSDVWAFGVLLWEIATYGMSPYPGIDLSQVYELLEKDYRMERPEGCPEKVYELMRACWQWNPSDRPSFAEIHQAFETMFQESSISDEVEKELGKQGVRGAVSTLLQAPELPTKTRTSRRAAEHRDTTDVPEMPHSKGQGESDPLDHEPAVSPLLPRKERGPPEGGLNEDERLLPKDKKTNLFSALIKKKKKTAPTPPKRSSSFREMDGQPERRGAGEEEGRDISNGALAFTPLDTADPAKSPKPSNGAGVPNGALRESGGSGFRSPHLWKKSSTLTSSRLATGEEEGGGSSSKRFLRSCSASCVPHGAKDTEWRSVTLPRDLQSTGRQFDSSTFGGHKSEKPALPRKRAGENRSDQVTRGTVTPPPRLVKKNEEAADEVFKDIMESSPGSSPPNLTPKPLRRQVTVAPASGLPHKEEAGKGSALGTPAAAEPVTPTSKAGSGAPGGTSKGPAEESRVRRHKHSSESPGRDKGKLSRLKPAPPPPPAASAGKAGGKPSQSPSQEAAGEAVLGAKTKATSLVDAVNSDAAKPSQPGEGLKKPVLPATPKPQSAKPSGTPISPAPVPSTLPSASSALAGDQPSSTAFIPLISTRVSLRKTRQPPERIASGAITKGVVLDSTEALCLAISRNSEQMASHSAVLEAGKNLYTFCVSYVDSIQQMRNKFAFREAINKLENNLRELQICPATAGSGPAATQDFSKLLSSVKEISDIVQR.

Residues 1–60 (MLEICLKLVGCKSKKGLSSSSSCYLEEALQRPVASDFEPQGLSEAARWNSKENLLAGPSE) are CAP. The N-myristoyl glycine moiety is linked to residue Leu-2. Phosphoserine is present on Ser-50. In terms of domain architecture, SH3 spans 61–121 (NDPNLFVALY…PSNYITPVNS (61 aa)). A Phosphotyrosine; by autocatalysis modification is found at Tyr-70. A phosphotyrosine mark is found at Tyr-115, Tyr-128, Tyr-139, Tyr-172, Tyr-185, and Tyr-215. Residues 127–217 (WYHGPVSRNA…GLITTLHYPA (91 aa)) enclose the SH2 domain. Tyr-226 is modified (phosphotyrosine; by autocatalysis). The residue at position 229 (Ser-229) is a Phosphoserine. In terms of domain architecture, Protein kinase spans 242 to 493 (ITMKHKLGGG…PSFAEIHQAF (252 aa)). 248–256 (LGGGQYGEV) contributes to the ATP binding site. Phosphotyrosine is present on residues Tyr-253 and Tyr-257. Residues Lys-271 and 316–322 (EFMTYGN) each bind ATP. Asp-363 (proton acceptor) is an active-site residue. A Kinase activation loop motif is present at residues 381–405 (DFGLSRLMTGDTYTAHAGAKFPIKW). A Phosphotyrosine; by autocatalysis and SRC-type Tyr-kinases modification is found at Tyr-393. Position 413 is a phosphotyrosine (Tyr-413). A phosphoserine mark is found at Ser-446, Ser-559, and Ser-569. Residues 518–996 (AVSTLLQAPE…SASSALAGDQ (479 aa)) form a disordered region. Residues 537–566 (RAAEHRDTTDVPEMPHSKGQGESDPLDHEP) are compositionally biased toward basic and acidic residues. Over residues 586-597 (EDERLLPKDKKT) the composition is skewed to basic and acidic residues. Residues 605-609 (KKKKK) carry the Nuclear localization signal 1 motif. 2 positions are modified to phosphoserine; by PAK2: Ser-618 and Ser-619. Phosphoserine occurs at positions 620, 659, and 683. The segment covering 620-640 (SFREMDGQPERRGAGEEEGRD) has biased composition (basic and acidic residues). A compositionally biased stretch (polar residues) spans 689 to 698 (KSSTLTSSRL). The Nuclear localization signal 2 signature appears at 709 to 715 (SSKRFLR). Position 711 is an N6-acetyllysine; by EP300 (Lys-711). Ser-718 carries the phosphoserine modification. 2 positions are modified to phosphothreonine: Thr-735 and Thr-751. Positions 740 to 752 (LQSTGRQFDSSTF) are enriched in polar residues. Over residues 755–774 (HKSEKPALPRKRAGENRSDQ) the composition is skewed to basic and acidic residues. Residues 762–769 (LPRKRAGE) carry the Nuclear localization signal 3 motif. Thr-781 bears the Phosphothreonine mark. The segment covering 788–802 (KKNEEAADEVFKDIM) has biased composition (basic and acidic residues). Thr-814, Thr-823, Thr-844, and Thr-852 each carry phosphothreonine. Ser-855 is subject to Phosphoserine. A DNA-binding region spans residues 869-968 (PAEESRVRRH…VLPATPKPQS (100 aa)). A compositionally biased stretch (basic and acidic residues) spans 881–891 (SSESPGRDKGK). Positions 905–915 (ASAGKAGGKPS) are enriched in low complexity. A Phosphoserine modification is found at Ser-917. Residues 953-1130 (EGLKKPVLPA…VKEISDIVQR (178 aa)) form an F-actin-binding region. The segment covering 965-975 (KPQSAKPSGTP) has biased composition (polar residues). Residue Ser-977 is modified to Phosphoserine. Residues 984–993 (TLPSASSALA) are compositionally biased toward low complexity. A Nuclear export signal motif is present at residues 1090 to 1100 (LENNLRELQIC).

The protein belongs to the protein kinase superfamily. Tyr protein kinase family. ABL subfamily. As to quaternary structure, interacts with SORBS1 following insulin stimulation. Found in a trimolecular complex containing CDK5 and CABLES1. Interacts with CABLES1 and PSTPIP1. Interacts with ZDHHC16, ITGB1 and HCK. Interacts with STX17; probably phosphorylates STX17. Interacts with INPPL1/SHIP2. Interacts with the 14-3-3 proteins, YWHAB, YWHAE, YWHAG, YWHAH, SFN and YWHAZ; the interaction with 14-3-3 proteins requires phosphorylation on Thr-735 and, sequesters ABL1 into the cytoplasm. Interacts with ABI1, ABI2, BCR, CRK, FGR, FYN, HCK, LYN, PSMA7 RAD9A, RAD51, RAD52, TP73 and WASF3. A complex made of ABL1, CTTN and MYLK regulates cortical actin-based cytoskeletal rearrangement critical to sphingosine 1-phosphate (S1P)-mediated endothelial cell (EC) barrier enhancement. Interacts (via SH3 domain) with CASP9; the interaction is direct and increases in the response of cells to genotoxic stress and ABL1/c-Abl activation. Found in a complex with ABL1, ABL2, CRK and UNC119; leading to the inhibition of CRK phosphorylation by ABL kinases. Interacts with TBX21. Interacts with NEDD9/HEF1; interaction is induced by CXCL12 promotion of ABL-mediated phosphorylation of NEDD9/HEF1. Requires Mg(2+) as cofactor. Post-translationally, acetylated at Lys-711 by EP300 which promotes the cytoplasmic translocation. In terms of processing, phosphorylation at Tyr-70 by members of the SRC family of kinases disrupts SH3 domain-based autoinhibitory interactions and intermolecular associations, such as that with ABI1, and also enhances kinase activity. Phosphorylation at Tyr-226 and Tyr-393 correlate with increased activity. DNA damage-induced activation of ABL1 requires the function of ATM and Ser-446 phosphorylation. Phosphorylation at Ser-569 has been attributed to a CDC2-associated kinase and is coupled to cell division. Phosphorylation at Ser-618 and Ser-619 by PAK2 increases binding to CRK and reduces binding to ABI1. Phosphorylation on Thr-735 is required for binding 14-3-3 proteins for cytoplasmic translocation. Phosphorylated by PRKDC. Polyubiquitinated. Polyubiquitination of ABL1 leads to degradation. As to expression, widely expressed.

It is found in the cytoplasm. The protein localises to the cytoskeleton. It localises to the nucleus. The protein resides in the mitochondrion. Its subcellular location is the nucleus membrane. It catalyses the reaction L-tyrosyl-[protein] + ATP = O-phospho-L-tyrosyl-[protein] + ADP + H(+). Stabilized in the inactive form by an association between the SH3 domain and the SH2-TK linker region, interactions of the N-terminal cap, and contributions from an N-terminal myristoyl group and phospholipids. Activated by autophosphorylation as well as by SRC-family kinase-mediated phosphorylation. Activated by RIN1 binding to the SH2 and SH3 domains. Also stimulated by cell death inducers and DNA-damage. Phosphatidylinositol 4,5-bisphosphate (PIP2), a highly abundant phosphoinositide known to regulate cytoskeletal and membrane proteins, also inhibits the tyrosine kinase activity. Activated by 5-(1,3-diaryl-1H-pyrazol-4-yl)hydantoin, 5-[3-(4-fluorophenyl)-1-phenyl-1H-pyrazol-4-yl]-2,4-imidazolidinedione (DPH). Inhibited by ABI1, whose activity is controlled by ABL1 itself through tyrosine phosphorylation. Also inhibited by imatinib mesylate (Gleevec) which is used for the treatment of chronic myeloid leukemia (CML), and by VX-680, an inhibitor that also acts on imatinib-resistant mutants. In terms of biological role, non-receptor tyrosine-protein kinase that plays a role in many key processes linked to cell growth and survival such as cytoskeleton remodeling in response to extracellular stimuli, cell motility and adhesion, receptor endocytosis, autophagy, DNA damage response and apoptosis. Coordinates actin remodeling through tyrosine phosphorylation of proteins controlling cytoskeleton dynamics like WASF3 (involved in branch formation); ANXA1 (involved in membrane anchoring); DBN1, DBNL, CTTN, RAPH1 and ENAH (involved in signaling); or MAPT and PXN (microtubule-binding proteins). Phosphorylation of WASF3 is critical for the stimulation of lamellipodia formation and cell migration. Involved in the regulation of cell adhesion and motility through phosphorylation of key regulators of these processes such as BCAR1, CRK, CRKL, DOK1, EFS or NEDD9. Phosphorylates multiple receptor tyrosine kinases and more particularly promotes endocytosis of EGFR, facilitates the formation of neuromuscular synapses through MUSK, inhibits PDGFRB-mediated chemotaxis and modulates the endocytosis of activated B-cell receptor complexes. Other substrates which are involved in endocytosis regulation are the caveolin (CAV1) and RIN1. Moreover, ABL1 regulates the CBL family of ubiquitin ligases that drive receptor down-regulation and actin remodeling. Phosphorylation of CBL leads to increased EGFR stability. Involved in late-stage autophagy by regulating positively the trafficking and function of lysosomal components. ABL1 targets to mitochondria in response to oxidative stress and thereby mediates mitochondrial dysfunction and cell death. In response to oxidative stress, phosphorylates serine/threonine kinase PRKD2 at 'Tyr-717'. ABL1 is also translocated in the nucleus where it has DNA-binding activity and is involved in DNA-damage response and apoptosis. Many substrates are known mediators of DNA repair: DDB1, DDB2, ERCC3, ERCC6, RAD9A, RAD51, RAD52 or WRN. Activates the proapoptotic pathway when the DNA damage is too severe to be repaired. Phosphorylates TP73, a primary regulator for this type of damage-induced apoptosis. Phosphorylates the caspase CASP9 on 'Tyr-153' and regulates its processing in the apoptotic response to DNA damage. Phosphorylates PSMA7 that leads to an inhibition of proteasomal activity and cell cycle transition blocks. ABL1 also acts as a regulator of multiple pathological signaling cascades during infection. Several known tyrosine-phosphorylated microbial proteins have been identified as ABL1 substrates. This is the case of A36R of Vaccinia virus, Tir (translocated intimin receptor) of pathogenic E.coli and possibly Citrobacter, CagA (cytotoxin-associated gene A) of H.pylori, or AnkA (ankyrin repeat-containing protein A) of A.phagocytophilum. Pathogens can highjack ABL1 kinase signaling to reorganize the host actin cytoskeleton for multiple purposes, like facilitating intracellular movement and host cell exit. Finally, functions as its own regulator through autocatalytic activity as well as through phosphorylation of its inhibitor, ABI1. Regulates T-cell differentiation in a TBX21-dependent manner. Positively regulates chemokine-mediated T-cell migration, polarization, and homing to lymph nodes and immune-challenged tissues, potentially via activation of NEDD9/HEF1 and RAP1. Phosphorylates TBX21 on tyrosine residues leading to an enhancement of its transcriptional activator activity. In Homo sapiens (Human), this protein is Tyrosine-protein kinase ABL1 (ABL1).